A 449-amino-acid chain; its full sequence is Exodeoxyribonuclease 7 large subunit (449 aa).

Belongs to the XseA family. In terms of assembly, heterooligomer composed of large and small subunits.

The protein resides in the cytoplasm. The enzyme catalyses Exonucleolytic cleavage in either 5'- to 3'- or 3'- to 5'-direction to yield nucleoside 5'-phosphates.. Bidirectionally degrades single-stranded DNA into large acid-insoluble oligonucleotides, which are then degraded further into small acid-soluble oligonucleotides. This chain is Exodeoxyribonuclease 7 large subunit, found in Salmonella agona (strain SL483).